Consider the following 312-residue polypeptide: Malate dehydrogenase (312 aa).

NAD(+) contacts are provided by residues G7 to G13 and D34. Substrate is bound by residues R81 and R87. NAD(+)-binding positions include N94 and I117–N119. Substrate contacts are provided by N119 and R153. The Proton acceptor role is filled by H177. M227 contacts NAD(+).

Belongs to the LDH/MDH superfamily. MDH type 1 family. In terms of assembly, homodimer.

The enzyme catalyses (S)-malate + NAD(+) = oxaloacetate + NADH + H(+). Catalyzes the reversible oxidation of malate to oxaloacetate. This chain is Malate dehydrogenase, found in Salmonella agona (strain SL483).